Consider the following 1369-residue polypeptide: Microtubule-associated tumor suppressor candidate 2 (1369 aa).

Disordered stretches follow at residues 180–262 (ASSS…TQTV), 374–442 (GRGN…FIPN), 477–509 (GENKTEVPEPLDPQSGRSEARESKEVTTSVAEN), 582–627 (NTSP…EERT), 791–839 (RSSA…LRPP), 861–992 (SSVS…QARE), and 1331–1369 (WKLQTGDPTSPIKLSPTSPVYRGSSSGPSSPARVSTTPR). Composition is skewed to polar residues over residues 246-262 (PSTSESKQSTPSETQTV) and 392-401 (LHTTPKQGSA). Residues 641 to 980 (RPKIITYIRR…PKQRTAAARN (340 aa)) are mediates interaction with MAPRE1. Positions 801–890 (GPITTATSLY…TRSTFGNEEQ (90 aa)) are sufficient for interaction with KIF2C. A localization to the growing distal tip of microtubules region spans residues 801–1150 (GPITTATSLY…HDAALLEMEN (350 aa)). The span at 804–814 (TTATSLYSSDP) shows a compositional bias: polar residues. Low complexity predominate over residues 821 to 834 (ASSSNAAKSNLPKS). Over residues 937-947 (TKKDAQKDQDT) the composition is skewed to basic and acidic residues. Residues 991-1335 (REAERQLVLR…NEELLWKLQT (345 aa)) are a coiled coil. Residues 1348–1369 (SPVYRGSSSGPSSPARVSTTPR) are compositionally biased toward low complexity.

In the C-terminal section; belongs to the MTUS1 family. In terms of assembly, homodimer. Interacts with KIF2C and MAPRE1; the interaction is direct and probably targets MTUS2 and KIF2C to microtubules. Detected in embryonic stem cells differentiating to cardiomyocytes.

The protein resides in the cytoplasm. It localises to the cytoskeleton. Its function is as follows. Binds microtubules. Together with MAPRE1 may target the microtubule depolymerase KIF2C to the plus-end of microtubules. May regulate the dynamics of microtubules at their growing distal tip. The protein is Microtubule-associated tumor suppressor candidate 2 (MTUS2) of Homo sapiens (Human).